The primary structure comprises 182 residues: Adenine phosphoribosyltransferase (182 aa).

Belongs to the purine/pyrimidine phosphoribosyltransferase family. As to quaternary structure, homodimer.

The protein localises to the cytoplasm. It catalyses the reaction AMP + diphosphate = 5-phospho-alpha-D-ribose 1-diphosphate + adenine. Its pathway is purine metabolism; AMP biosynthesis via salvage pathway; AMP from adenine: step 1/1. Functionally, catalyzes a salvage reaction resulting in the formation of AMP, that is energically less costly than de novo synthesis. This chain is Adenine phosphoribosyltransferase, found in Saccharopolyspora erythraea (strain ATCC 11635 / DSM 40517 / JCM 4748 / NBRC 13426 / NCIMB 8594 / NRRL 2338).